Here is a 409-residue protein sequence, read N- to C-terminus: MHWGVGFASSRPCVVDLSWNQSISFFGWWAGSEEPFSFYGDIIAFPLQDYGGIMAGLGSDPWWKKTLYLTGGALLAAAAYLLHELLVIRKQQEIDSKDAIILHQFARPNNGVPSLSPFCLKMETYLRMADLPYQNYFGGKLSAQGKMPWIEYNHEKVSGTEFIIDFLEEKLGVNLNKNLGPHERAISRAVTKMVEEHFYWTLAYCQWVDNLNETRKMLSLSGGGPFSNLLRWVVCHITKGIVKREMHGHGIGRFSEEEIYMLMEKDMRSLAGLLGDKKYIMGPKLSTLDATVFGHLAQAMWTLPGTRPERLIKGELINLAMYCERIRRKFWPEWHHDDDNTIYESEESSEGSKTHTPLLDFSFYSRTETFEDEGAENSFSRTPDTDFTGHSLFDSDVDMDDYTDHEQCK.

A helical transmembrane segment spans residues 68-88 (YLTGGALLAAAAYLLHELLVI). Positions 372 to 409 (DEGAENSFSRTPDTDFTGHSLFDSDVDMDDYTDHEQCK) are disordered.

It belongs to the FAX family.

Its subcellular location is the membrane. Functionally, may play a role in axonal development. The chain is Failed axon connections homolog (FAXC) from Homo sapiens (Human).